The chain runs to 195 residues: SXP/RAL-2-like protein 2 (195 aa).

Positions 162-195 are disordered; sequence EKVHGGSHGGLRGGPGGPRDGPRGGPRGGPRGGR. The span at 167–195 shows a compositional bias: gly residues; it reads GSHGGLRGGPGGPRDGPRGGPRGGPRGGR.

This sequence belongs to the SXP/RAL-2 family.

The protein is SXP/RAL-2-like protein 2 of Caenorhabditis elegans.